We begin with the raw amino-acid sequence, 140 residues long: Putative nickel-responsive regulator 2 (140 aa).

Positions 77, 88, 90, and 96 each coordinate Ni(2+).

Belongs to the transcriptional regulatory CopG/NikR family. It depends on Ni(2+) as a cofactor.

Its function is as follows. Transcriptional regulator. The sequence is that of Putative nickel-responsive regulator 2 from Methanothermobacter thermautotrophicus (strain ATCC 29096 / DSM 1053 / JCM 10044 / NBRC 100330 / Delta H) (Methanobacterium thermoautotrophicum).